Reading from the N-terminus, the 234-residue chain is 1-(5-phosphoribosyl)-5-[(5-phosphoribosylamino)methylideneamino] imidazole-4-carboxamide isomerase (234 aa).

The active-site Proton acceptor is the Asp-9. The active-site Proton donor is Asp-131.

The protein belongs to the HisA/HisF family.

It is found in the cytoplasm. It catalyses the reaction 1-(5-phospho-beta-D-ribosyl)-5-[(5-phospho-beta-D-ribosylamino)methylideneamino]imidazole-4-carboxamide = 5-[(5-phospho-1-deoxy-D-ribulos-1-ylimino)methylamino]-1-(5-phospho-beta-D-ribosyl)imidazole-4-carboxamide. It functions in the pathway amino-acid biosynthesis; L-histidine biosynthesis; L-histidine from 5-phospho-alpha-D-ribose 1-diphosphate: step 4/9. This Staphylococcus epidermidis (strain ATCC 12228 / FDA PCI 1200) protein is 1-(5-phosphoribosyl)-5-[(5-phosphoribosylamino)methylideneamino] imidazole-4-carboxamide isomerase.